We begin with the raw amino-acid sequence, 78 residues long: UPF0349 protein GK2958 (78 aa).

This sequence belongs to the UPF0349 family.

The protein is UPF0349 protein GK2958 of Geobacillus kaustophilus (strain HTA426).